Consider the following 461-residue polypeptide: uncharacterized protein (461 aa).

This is an uncharacterized protein from Saccharomyces cerevisiae (strain ATCC 204508 / S288c) (Baker's yeast).